The primary structure comprises 140 residues: Alpha-lactalbumin (140 aa).

Residues 1 to 19 form the signal peptide; sequence MMSLLSLLLLGIALPATQA. Residues 20–140 enclose the C-type lysozyme domain; that stretch reads IDYRKCQASQ…CIEDLDQWRC (121 aa). 4 cysteine pairs are disulfide-bonded: cysteine 25/cysteine 140, cysteine 47/cysteine 131, cysteine 80/cysteine 96, and cysteine 92/cysteine 110. Asparagine 63 is a glycosylation site (N-linked (GlcNAc...) asparagine). Ca(2+) contacts are provided by lysine 98, aspartate 101, aspartate 103, aspartate 106, and aspartate 107.

This sequence belongs to the glycosyl hydrolase 22 family. Lactose synthase (LS) is a heterodimer of a catalytic component, beta1,4-galactosyltransferase (beta4Gal-T1) and a regulatory component, alpha-lactalbumin (LA). In terms of tissue distribution, mammary gland specific. Secreted in milk.

It localises to the secreted. Functionally, regulatory subunit of lactose synthase, changes the substrate specificity of galactosyltransferase in the mammary gland making glucose a good acceptor substrate for this enzyme. This enables LS to synthesize lactose, the major carbohydrate component of milk. In other tissues, galactosyltransferase transfers galactose onto the N-acetylglucosamine of the oligosaccharide chains in glycoproteins. In Notamacropus eugenii (Tammar wallaby), this protein is Alpha-lactalbumin (LALBA).